Here is a 440-residue protein sequence, read N- to C-terminus: uncharacterized protein (440 aa).

Disordered regions lie at residues 49-81 and 162-295; these read CPPA…EPSL and LPKP…CASE. The span at 55 to 80 shows a compositional bias: polar residues; sequence HGHSSLRTNLNSSPPRCPQNPGTEPS. Positions 249–266 are enriched in basic and acidic residues; it reads YREELSNTKSRFSEDKGS. The span at 274–284 shows a compositional bias: low complexity; the sequence is SSNSSEPGLPG.

Belongs to the tymoviridae protein p69 family.

This is an uncharacterized protein from Erysimum latent virus (ELV).